The chain runs to 239 residues: Probable GTP-binding protein EngB (239 aa).

The region spanning 23-219 (QVPEIAFAGR…NDKILELLGL (197 aa)) is the EngB-type G domain. Residues 31–38 (GRSNAGKS), 58–62 (GRTQH), 92–95 (DLPG), 159–162 (TKSD), and 193–200 (FTAQLFSA) each bind GTP. Residues Ser38 and Thr60 each contribute to the Mg(2+) site.

This sequence belongs to the TRAFAC class TrmE-Era-EngA-EngB-Septin-like GTPase superfamily. EngB GTPase family. Requires Mg(2+) as cofactor.

Functionally, necessary for normal cell division and for the maintenance of normal septation. The chain is Probable GTP-binding protein EngB from Herminiimonas arsenicoxydans.